A 150-amino-acid chain; its full sequence is MKLILTAAVENLGAPGEIVEVKDGYGRNYLLPRGLAIVATRGAEKQIEGIKRAQEARAIRDLDHAREIRTQLEELKDVNVPVKTSESGKLFGSVSAEDIVNAVAAAGGPKLDKRIVVLPKGLVKKTGNYQVELKLHADVIGKVNFSVVAA.

Belongs to the bacterial ribosomal protein bL9 family.

Binds to the 23S rRNA. This Corynebacterium aurimucosum (strain ATCC 700975 / DSM 44827 / CIP 107346 / CN-1) (Corynebacterium nigricans) protein is Large ribosomal subunit protein bL9.